Consider the following 431-residue polypeptide: Isochorismate synthase MenF (431 aa).

The active-site Proton acceptor is Lys-183. Catalysis depends on Glu-233, which acts as the Proton donor. Residues Glu-277 and Glu-414 each contribute to the Mg(2+) site.

Belongs to the isochorismate synthase family. The cofactor is Mg(2+).

The catalysed reaction is chorismate = isochorismate. Its pathway is quinol/quinone metabolism; 1,4-dihydroxy-2-naphthoate biosynthesis; 1,4-dihydroxy-2-naphthoate from chorismate: step 1/7. It participates in quinol/quinone metabolism; menaquinone biosynthesis. In terms of biological role, catalyzes the conversion of chorismate to isochorismate. The chain is Isochorismate synthase MenF from Pasteurella multocida (strain Pm70).